The chain runs to 2774 residues: MDVKDRRHRSLTRGRCGKECRYTSSSLDSEDCRVPTQKSYSSSETLKAYDHDSRMHYGNRVTDLIHRESDEFPRQGTNFTLAELGICEPSPHRSGYCSDMGILHQGYSLSTGSDADSDTEGGMSPEHAIRLWGRGIKSRRSSGLSSRENSALTLTDSDNENKSDDENGRPIPPTSSPSLLPSAQLPSSHNPPPVSCQMPLLDSNTSHQIMDTNPDEEFSPNSYLLRACSGPQQASSSGPPNHHSQSTLRPPLPPPHNHTLSHHHSSANSLNRNSLTNRRSQIHAPAPAPNDLATTPESVQLQDSWVLNSNVPLETRHFLFKTSSGSTPLFSSSSPGYPLTSGTVYTPPPRLLPRNTFSRKAFKLKKPSKYCSWKCAALSAIAAALLLAILLAYFIAMHLLGLNWQLQPADGHTFNNGIRTGLPGNDDVATMPSGGKVPWSLKNSSIDSGEAEVGRRVTQEVPPGVFWRSQIHISQPQFLKFNISLGKDALFGVYIRRGLPPSHAQYDFMERLDGKEKWSVVESPRERRSIQTLVQNEAVFVQYLDVGLWHLAFYNDGKDKEMVSFNTVVLDSVQDCPRNCHGNGECVSGVCHCFPGFLGADCAKAACPVLCSGNGQYSKGTCQCYSGWKGAECDVPMNQCIDPSCGGHGSCIDGNCVCSAGYKGEHCEEVDCLDPTCSSHGVCVNGECLCSPGWGGLNCELARVQCPDQCSGHGTYLPDTGLCSCDPNWMGPDCSVEVCSVDCGTHGVCIGGACRCEEGWTGAACDQRVCHPRCIEHGTCKDGKCECREGWNGEHCTIGRQTAGTETDGCPDLCNGNGRCTLGQNSWQCVCQTGWRGPGCNVAMETSCADNKDNEGDGLVDCLDPDCCLQSACQNSLLCRGSRDPLDIIQQGQTDWPAVKSFYDRIKLLAGKDSTHIIPGENPFNSSLVSLIRGQVVTTDGTPLVGVNVSFVKYPKYGYTITRQDGTFDLIANGGASLTLHFERAPFMSQERTVWLPWNSFYAMDTLVMKTEENSIPSCDLSGFVRPDPIIISSPLSTFFSAAPGQNPIVPETQVLHEEIELPGSNVKLRYLSSRTAGYKSLLKITMTQSTVPLNLIRVHLMVAVEGHLFQKSFQASPNLAYTFIWDKTDAYGQRVYGLSDAVVSVGFEYETCPSLILWEKRTALLQGFELDPSNLGGWSLDKHHILNVKSGILHKGTGENQFLTQQPAIITSIMGNGRRRSISCPSCNGLAEGNKLLAPVALAVGIDGSLYVGDFNYIRRIFPSRNVTSILELRNKEFKHSNNPAHKYYLAVDPVSGSLYVSDTNSRRIYRVKSLSGTKDLAGNSEVVAGTGEQCLPFDEARCGDGGKAIDATLMSPRGIAVDKNGLMYFVDATMIRKVDQNGIISTLLGSNDLTAVRPLSCDSSMDVAQVRLEWPTDLAVNPMDNSLYVLENNVILRITENHQVSIIAGRPMHCQVPGIDYSLSKLAIHSALESASAIAISHTGVLYITETDEKKINRLRQVTTNGEICLLAGAASDCDCKNDVNCNCYSGDDAYATDAILNSPSSLAVAPDGTIYIADLGNIRIRAVSKNKPVLNAFNQYEAASPGEQELYVFNADGIHQYTVSLVTGEYLYNFTYSTDNDVTELIDNNGNSLKIRRDSSGMPRHLLMPDNQIITLTVGTNGGLKVVSTQNLELGLMTYDGNTGLLATKSDETGWTTFYDYDHEGRLTNVTRPTGVVTSLHREMEKSITIDIENSNRDDDVTVITNLSSVEASYTVVQDQVRNSYQLCNNGTLRVMYANGMGISFHSEPHVLAGTITPTIGRCNISLPMENGLNSIEWRLRKEQIKGKVTIFGRKLRVHGRNLLSIDYDRNIRTEKIYDDHRKFTLRIIYDQVGRPFLWLPSSGLAAVNVSYFFNGRLAGLQRGAMSERTDIDKQGRIVSRMFADGKVWSYSYLDKSMVLLLQSQRQYIFEYDSSDRLLAVTMPSVARHSMSTHTSIGYIRNIYNPPESNASVIFDYSDDGRILKTSFLGTGRQVFYKYGKLSKLSEIVYDSTAVTFGYDETTGVLKMVNLQSGGFSCTIRYRKIGPLVDKQIYRFSEEGMVNARFDYTYHDNSFRIASIKPVISETPLPVDLYRYDEISGKVEHFGKFGVIYYDINQIITTAVMTLSKHFDTHGRIKEVQYEMFRSLMYWMTVQYDSMGRVIKRELKLGPYANTTKYTYDYDGDGQLQSVAVNDRPTWRYSYDLNGNLHLLNPGNSVRLMPLRYDLRDRITRLGDVQYKIDDDGYLCQRGSDIFEYNSKGLLTRAYNKASGWSVQYRYDGVGRRASYKTNLGHHLQYFYSDLHNPTRITHVYNHSNSEITSLYYDLQGHLFAMESSSGEEYYVASDNTGTPLAVFSINGLMIKQLQYTAYGEIYYDSNPDFQMVIGFHGGLYDPLTKLVHFTQRDYDVLAGRWTSPDYTMWKNVGKEPAPFNLYMFKSNNPLSSELDLKNYVTDVKSWLVMFGFQLSNIIPGFPRAKMYFVPPPYELSESQASENGQLITGVQQTTERHNQAFMALEGQVITKKLHASIREKAGHWFATTTPIIGKGIMFAIKEGRVTTGVSSIASEDSRKVASVLNNAYYLDKMHYSIEGKDTHYFVKIGSADGDLVTLGTTIGRKVLESGVNVTVSQPTLLVNGRTRRFTNIEFQYSTLLLSIRYGLTPDTLDEEKARVLDQARQRALGTAWAKEQQKARDGREGSRLWTEGEKQQLLSTGRVQGYEGYYVLPVEQYPELADSSSNIQFLRQNEMGKR.

The region spanning 1–375 is the Teneurin N-terminal domain; that stretch reads MDVKDRRHRS…KPSKYCSWKC (375 aa). At 1-379 the chain is on the cytoplasmic side; it reads MDVKDRRHRS…YCSWKCAALS (379 aa). A phosphoserine mark is found at S90 and S124. The interval 111-271 is disordered; that stretch reads TGSDADSDTE…HHHSSANSLN (161 aa). Residues 141–155 show a composition bias toward polar residues; it reads SSGLSSRENSALTLT. Phosphothreonine is present on T155. A Phosphoserine modification is found at S157. A compositionally biased stretch (basic and acidic residues) spans 159 to 168; it reads NENKSDDENG. The segment covering 176–188 has biased composition (low complexity); it reads SPSLLPSAQLPSS. Polar residues predominate over residues 202–211; it reads DSNTSHQIMD. Low complexity predominate over residues 229–240; sequence SGPQQASSSGPP. Residues 380 to 400 traverse the membrane as a helical segment; that stretch reads AIAAALLLAILLAYFIAMHLL. Topologically, residues 401–2774 are extracellular; sequence GLNWQLQPAD…FLRQNEMGKR (2374 aa). N-linked (GlcNAc...) asparagine glycans are attached at residues N443 and N482. 8 EGF-like domains span residues 575–603, 598–634, 636–668, 669–701, 702–735, 738–766, 769–797, and 808–841; these read DCPR…ADCA, LGAD…AECD, PMNQ…EHCE, EVDC…NCEL, ARVQ…PDCS, VCSV…AACD, VCHP…EHCT, and DGCP…PGCN. Disulfide bonds link C576–C586, C580–C591, C593–C602, C611–C622, C624–C633, C640–C651, C645–C656, C658–C667, C672–C683, C677–C688, C690–C699, C710–C723, C725–C734, C739–C749, C743–C754, C756–C765, C770–C780, C774–C785, C787–C796, C810–C820, C814–C829, and C831–C840. 3 N-linked (GlcNAc...) asparagine glycosylation sites follow: N925, N948, and N1267. NHL repeat units follow at residues 1272-1316, 1342-1386, 1401-1452, 1474-1501, and 1530-1573; these read LELR…VKSL, ARCG…NGII, LSCD…IAGR, LESA…INRL, and CYSG…VSKN. One copy of the YD 1 repeat lies at 1583-1602; sequence YEAASPGEQELYVFNADGIH. N1616 carries N-linked (GlcNAc...) asparagine glycosylation. YD repeat units lie at residues 1619 to 1639, 1682 to 1701, and 1702 to 1724; these read YSTD…LKIR, YDGN…WTTF, and YDYD…TSLH. N1712, N1749, N1773, N1807, and N1892 each carry an N-linked (GlcNAc...) asparagine glycan. YD repeat units lie at residues 1895-1914, 1936-1954, 1955-1975, 1982-1999, 2000-2021, 2022-2039, 2042-2062, 2065-2085, 2093-2113, 2119-2136, 2137-2163, 2165-2178, 2179-2202, 2205-2225, 2226-2246, 2248-2268, 2280-2300, and 2302-2322; these read YFFN…ERTD, YLDK…YIFE, YDSS…HSMS, YIRN…VIFD, YSDD…VFYK, YGKL…TAVT, YDET…FSCT, YRKI…EGMV, YHDN…TPLP, YDEI…GVIY, YDIN…IKEV, YEMF…MTVQ, YDSM…TKYT, YDGD…WRYS, YDLN…LMPL, YDLR…DDDG, YNSK…SVQY, and YDGV…LQYF. Residue N1993 is glycosylated (N-linked (GlcNAc...) asparagine). N2197 carries an N-linked (GlcNAc...) asparagine glycan. N-linked (GlcNAc...) asparagine glycosylation is present at N2337. One copy of the YD 23 repeat lies at 2348–2389; the sequence is YDLQGHLFAMESSSGEEYYVASDNTGTPLAVFSINGLMIKQL. N-linked (GlcNAc...) asparagine glycosylation occurs at N2648.

It belongs to the tenascin family. Teneurin subfamily. As to quaternary structure, homodimer; disulfide-linked. Heterodimer with either TENM1 or TENM3. May also form heterodimer with TENM4. Isoform 2 (C-terminal globular domain) interacts with ADGRL1 isoform 2. Derives from the membrane form by proteolytic processing. Post-translationally, derives from the plasma membrane form by proteolytic cleavage and translocates to the nucleus. Homophilic binding of the C-terminal extracellular domain stimulates its proteolytic cleavage and release in the cytoplasmic. Is subjected to rapid degradation by the proteasome pathway. Highly expressed in heart, followed by brain, liver, kidney and fetal brain and weakly expressed in lung and testis. No expression was detected in skeletal muscle, pancreas, spleen, ovary and fetal liver.

The protein localises to the cell membrane. Its subcellular location is the presynaptic cell membrane. The protein resides in the postsynaptic cell membrane. It is found in the endoplasmic reticulum. It localises to the golgi apparatus. The protein localises to the synapse. Its subcellular location is the cell projection. The protein resides in the dendritic spine. It is found in the filopodium. It localises to the growth cone. The protein localises to the nucleus. Its subcellular location is the PML body. Its function is as follows. Involved in neural development, regulating the establishment of proper connectivity within the nervous system. Acts as a ligand of the ADGRL1 and ADGRL3 receptors that are expressed at the surface of adjacent cells. Promotes the formation of filopodia and enlarged growth cone in neuronal cells. Mediates axon guidance and homophilic and heterophilic cell-cell adhesion. May function as a cellular signal transducer. In terms of biological role, acts as a ligand of the ADGRL1 receptor. Mediates axon guidance and heterophilic cell-cell adhesion. Induces gene transcription inhibition. In Homo sapiens (Human), this protein is Teneurin-2 (TENM2).